A 130-amino-acid chain; its full sequence is Protachykinin-1 (130 aa).

Residues 1-19 (MKILVAVAVFFLVSTQLSA) form the signal peptide. A propeptide spanning residues 20–56 (EEIGANDDLNYWSDWSDSDQIKEALPEPFEHILQRIA) is cleaved from the precursor. M68 and M107 each carry methionine amide.

Belongs to the tachykinin family. In terms of processing, the substance P form is cleaved at Pro-59 by the prolyl endopeptidase FAP (seprase) activity (in vitro). Substance P is also cleaved and degraded by Angiotensin-converting enzyme (ACE) and neprilysin (MME).

It is found in the secreted. Tachykinins are active peptides which excite neurons, evoke behavioral responses, are potent vasodilators and secretagogues, and contract (directly or indirectly) many smooth muscles. This is Protachykinin-1 (TAC1) from Mesocricetus auratus (Golden hamster).